We begin with the raw amino-acid sequence, 319 residues long: Cytochrome f (319 aa).

Positions M1 to A35 are cleaved as a signal peptide. The heme site is built by Y36, C56, C59, and H60. The helical transmembrane segment at I285–K305 threads the bilayer.

It belongs to the cytochrome f family. As to quaternary structure, the 4 large subunits of the cytochrome b6-f complex are cytochrome b6, subunit IV (17 kDa polypeptide, petD), cytochrome f and the Rieske protein, while the 4 small subunits are PetG, PetL, PetM and PetN. The complex functions as a dimer. Requires heme as cofactor.

It is found in the plastid. Its subcellular location is the chloroplast thylakoid membrane. In terms of biological role, component of the cytochrome b6-f complex, which mediates electron transfer between photosystem II (PSII) and photosystem I (PSI), cyclic electron flow around PSI, and state transitions. This is Cytochrome f from Zygnema circumcarinatum (Green alga).